The sequence spans 451 residues: Glycine--tRNA ligase (451 aa).

2 residues coordinate substrate: arginine 99 and glutamate 168. Residues 200 to 202 (RNE), 210 to 215 (FRTREF), 284 to 285 (EL), and 328 to 331 (GLDR) contribute to the ATP site. 215-219 (FEQME) contacts substrate. 324–328 (EPSVG) serves as a coordination point for substrate.

Belongs to the class-II aminoacyl-tRNA synthetase family. Homodimer.

It is found in the cytoplasm. The enzyme catalyses tRNA(Gly) + glycine + ATP = glycyl-tRNA(Gly) + AMP + diphosphate. Its function is as follows. Catalyzes the attachment of glycine to tRNA(Gly). The protein is Glycine--tRNA ligase of Mycoplasmopsis synoviae (strain 53) (Mycoplasma synoviae).